A 207-amino-acid chain; its full sequence is Probable RNA 2'-phosphotransferase (207 aa).

It belongs to the KptA/TPT1 family.

Its function is as follows. Removes the 2'-phosphate from RNA via an intermediate in which the phosphate is ADP-ribosylated by NAD followed by a presumed transesterification to release the RNA and generate ADP-ribose 1''-2''-cyclic phosphate (APPR&gt;P). May function as an ADP-ribosylase. This is Probable RNA 2'-phosphotransferase from Methanosarcina barkeri (strain Fusaro / DSM 804).